Reading from the N-terminus, the 103-residue chain is Putative double-stranded DNA mimic protein HAPS_1002 (103 aa).

It belongs to the putative dsDNA mimic protein family.

Functionally, may act as a double-stranded DNA (dsDNA) mimic. Probably regulates the activity of a dsDNA-binding protein. The polypeptide is Putative double-stranded DNA mimic protein HAPS_1002 (Glaesserella parasuis serovar 5 (strain SH0165) (Haemophilus parasuis)).